Reading from the N-terminus, the 124-residue chain is Membrane-anchored ubiquitin-fold protein 2 (124 aa).

Positions Leu-8–Cys-74 constitute a Ubiquitin-like domain. S-palmitoyl cysteine attachment occurs at residues Cys-115, Cys-117, Cys-119, and Cys-124.

In terms of processing, acylated protein. Probably modified with palmitate. Ubiquitous, but three fold higher expression in stamens.

It localises to the cell membrane. Its function is as follows. May serve as docking site to facilitate the association of other proteins to the plasma membrane. This is Membrane-anchored ubiquitin-fold protein 2 (MUB2) from Arabidopsis thaliana (Mouse-ear cress).